The primary structure comprises 431 residues: Tol-Pal system protein TolB (431 aa).

A signal peptide spans Met1–Ala18. Positions Leu410–Gln431 are disordered.

This sequence belongs to the TolB family. In terms of assembly, the Tol-Pal system is composed of five core proteins: the inner membrane proteins TolA, TolQ and TolR, the periplasmic protein TolB and the outer membrane protein Pal. They form a network linking the inner and outer membranes and the peptidoglycan layer.

It is found in the periplasm. Its function is as follows. Part of the Tol-Pal system, which plays a role in outer membrane invagination during cell division and is important for maintaining outer membrane integrity. The sequence is that of Tol-Pal system protein TolB from Myxococcus xanthus.